The chain runs to 148 residues: Lysozyme C (148 aa).

Residues 1-18 (MKAVIILGLVLLSVTVQG) form the signal peptide. The 130-residue stretch at 19–148 (KIFERCELAR…VSQYVQGCGV (130 aa)) folds into the C-type lysozyme domain. 4 cysteine pairs are disulfide-bonded: Cys-24–Cys-146, Cys-48–Cys-134, Cys-83–Cys-99, and Cys-95–Cys-113. Catalysis depends on residues Glu-53 and Asp-71.

It belongs to the glycosyl hydrolase 22 family. In terms of assembly, monomer.

The catalysed reaction is Hydrolysis of (1-&gt;4)-beta-linkages between N-acetylmuramic acid and N-acetyl-D-glucosamine residues in a peptidoglycan and between N-acetyl-D-glucosamine residues in chitodextrins.. Its function is as follows. Lysozymes have primarily a bacteriolytic function; those in tissues and body fluids are associated with the monocyte-macrophage system and enhance the activity of immunoagents. The sequence is that of Lysozyme C (LYZ) from Allenopithecus nigroviridis (Allen's swamp monkey).